A 101-amino-acid chain; its full sequence is Small ribosomal subunit protein uS14 (101 aa).

The protein belongs to the universal ribosomal protein uS14 family. As to quaternary structure, part of the 30S ribosomal subunit. Contacts proteins S3 and S10.

Functionally, binds 16S rRNA, required for the assembly of 30S particles and may also be responsible for determining the conformation of the 16S rRNA at the A site. The protein is Small ribosomal subunit protein uS14 of Zymomonas mobilis subsp. mobilis (strain ATCC 31821 / ZM4 / CP4).